The sequence spans 388 residues: Transposase for insertion sequence element IS406 (388 aa).

It belongs to the transposase mutator family.

Required for the transposition of the insertion element. The chain is Transposase for insertion sequence element IS406 from Burkholderia multivorans (strain ATCC 17616 / 249).